The primary structure comprises 225 residues: UPF0758 protein Sden_0326 (225 aa).

The 123-residue stretch at 102–224 folds into the MPN domain; that stretch reads ILTNPDLTRD…IVSFAERGWL (123 aa). 3 residues coordinate Zn(2+): histidine 173, histidine 175, and aspartate 186. The short motif at 173–186 is the JAMM motif element; sequence HNHPSGIAEPSQAD.

This sequence belongs to the UPF0758 family.

The protein is UPF0758 protein Sden_0326 of Shewanella denitrificans (strain OS217 / ATCC BAA-1090 / DSM 15013).